The following is a 95-amino-acid chain: Integration host factor subunit beta (95 aa).

Residues 56–76 form a disordered region; that stretch reads RAPRTGRNPKTGTSVELDGKY.

It belongs to the bacterial histone-like protein family. In terms of assembly, heterodimer of an alpha and a beta chain.

In terms of biological role, this protein is one of the two subunits of integration host factor, a specific DNA-binding protein that functions in genetic recombination as well as in transcriptional and translational control. In Shewanella denitrificans (strain OS217 / ATCC BAA-1090 / DSM 15013), this protein is Integration host factor subunit beta.